Reading from the N-terminus, the 359-residue chain is 1-deoxy-D-xylulose 5-phosphate reductoisomerase (359 aa).

NADPH-binding residues include T12, G13, S14, I15, K38, and N39. Position 105 (K105) interacts with 1-deoxy-D-xylulose 5-phosphate. NADPH is bound at residue E106. D130 provides a ligand contact to Mn(2+). Positions 131, 132, 152, and 175 each coordinate 1-deoxy-D-xylulose 5-phosphate. E132 is a Mn(2+) binding site. G181 lines the NADPH pocket. Residues S188, N193, K194, and E197 each coordinate 1-deoxy-D-xylulose 5-phosphate. E197 serves as a coordination point for Mn(2+).

The protein belongs to the DXR family. Mg(2+) serves as cofactor. The cofactor is Mn(2+).

It carries out the reaction 2-C-methyl-D-erythritol 4-phosphate + NADP(+) = 1-deoxy-D-xylulose 5-phosphate + NADPH + H(+). It participates in isoprenoid biosynthesis; isopentenyl diphosphate biosynthesis via DXP pathway; isopentenyl diphosphate from 1-deoxy-D-xylulose 5-phosphate: step 1/6. Its function is as follows. Catalyzes the NADPH-dependent rearrangement and reduction of 1-deoxy-D-xylulose-5-phosphate (DXP) to 2-C-methyl-D-erythritol 4-phosphate (MEP). The chain is 1-deoxy-D-xylulose 5-phosphate reductoisomerase from Pseudothermotoga lettingae (strain ATCC BAA-301 / DSM 14385 / NBRC 107922 / TMO) (Thermotoga lettingae).